Reading from the N-terminus, the 198-residue chain is Mediator of RNA polymerase II transcription subunit 20 (198 aa).

Belongs to the Mediator complex subunit 20 family. Component of the Mediator complex.

The protein resides in the nucleus. In terms of biological role, component of the Mediator complex, a coactivator involved in the regulated transcription of nearly all RNA polymerase II-dependent genes. Mediator functions as a bridge to convey information from gene-specific regulatory proteins to the basal RNA polymerase II transcription machinery. Mediator is recruited to promoters by direct interactions with regulatory proteins and serves as a scaffold for the assembly of a functional preinitiation complex with RNA polymerase II and the general transcription factors. This is Mediator of RNA polymerase II transcription subunit 20 (mdt-20) from Caenorhabditis briggsae.